The following is a 376-amino-acid chain: Acetate kinase (376 aa).

Asparagine 7 contacts Mg(2+). Residue lysine 14 coordinates ATP. Arginine 71 serves as a coordination point for substrate. Aspartate 128 (proton donor/acceptor) is an active-site residue. Residues histidine 188–glycine 192, aspartate 262–arginine 264, and glycine 310–asparagine 314 contribute to the ATP site. Glutamate 364 serves as a coordination point for Mg(2+).

This sequence belongs to the acetokinase family. In terms of assembly, homodimer. Mg(2+) is required as a cofactor. Requires Mn(2+) as cofactor.

Its subcellular location is the cytoplasm. The catalysed reaction is acetate + ATP = acetyl phosphate + ADP. Its pathway is metabolic intermediate biosynthesis; acetyl-CoA biosynthesis; acetyl-CoA from acetate: step 1/2. Functionally, catalyzes the formation of acetyl phosphate from acetate and ATP. Can also catalyze the reverse reaction. This Mycolicibacterium smegmatis (strain ATCC 700084 / mc(2)155) (Mycobacterium smegmatis) protein is Acetate kinase.